Here is a 501-residue protein sequence, read N- to C-terminus: ATP synthase subunit beta (501 aa).

Residue G153 to T160 participates in ATP binding.

This sequence belongs to the ATPase alpha/beta chains family. F-type ATPases have 2 components, CF(1) - the catalytic core - and CF(0) - the membrane proton channel. CF(1) has five subunits: alpha(3), beta(3), gamma(1), delta(1), epsilon(1). CF(0) has three main subunits: a(1), b(2) and c(9-12). The alpha and beta chains form an alternating ring which encloses part of the gamma chain. CF(1) is attached to CF(0) by a central stalk formed by the gamma and epsilon chains, while a peripheral stalk is formed by the delta and b chains.

The protein resides in the cell inner membrane. It carries out the reaction ATP + H2O + 4 H(+)(in) = ADP + phosphate + 5 H(+)(out). Produces ATP from ADP in the presence of a proton gradient across the membrane. The catalytic sites are hosted primarily by the beta subunits. The polypeptide is ATP synthase subunit beta (Cytophaga hutchinsonii (strain ATCC 33406 / DSM 1761 / CIP 103989 / NBRC 15051 / NCIMB 9469 / D465)).